A 518-amino-acid polypeptide reads, in one-letter code: MTHLHFDNRLRQQLPGDPEEGARRREVGAAWSSVLPTPVAAPYLIAHSAEMAQVLGLEAAEIASAQFAQVFGGNALYPGMQPWAVNYGGHQFGHWAGQLGDGRAISLGEAIGTDGGRYELQLKGAGPTPYSRGADGRAVLRSSIREFLCSEAMHHLGVPTTRALSLVGTGEAVVRDMFYDGHPQREPGAIVCRVAPSFIRFGNFELPSARGDIALLKQWVDFTIARDFPALAGAGEALYADWFAQVCERTAVMVAHWMRVGFVHGVMNTDNMSILGLTIDYGPYGWVDDYDPDWTPNTTDAQGRRYRFGTQPQVAYWNLGRLAQALAPLFADQALLQYGLDRFRDTYLACDRRDTAAKLGLAECRDEDLQLIDALRALMRESEMDMTLTFRGLIDLSPEHPDPAQLRDAFYDEDKRLVDAPQLQQWLQRYAARLQQDPLSPEERRARMRLANPRYVLRNYLAQQAIDRAEQGDPSGVQELLEVMRRPYDDQHGRDAFAARRPDWARDRAGCSMLSCSS.

Over residues Met1–Leu10 the composition is skewed to basic and acidic residues. Residues Met1–Arg25 form a disordered region. Residues Gly100, Gly102, Arg103, Lys123, Asp135, Gly136, Arg193, and Arg200 each coordinate ATP. Residue Asp270 is the Proton acceptor of the active site. Residues Asn271 and Asp280 each coordinate Mg(2+). An ATP-binding site is contributed by Asp280.

It belongs to the SELO family. Requires Mg(2+) as cofactor. Mn(2+) is required as a cofactor.

It catalyses the reaction L-seryl-[protein] + ATP = 3-O-(5'-adenylyl)-L-seryl-[protein] + diphosphate. The catalysed reaction is L-threonyl-[protein] + ATP = 3-O-(5'-adenylyl)-L-threonyl-[protein] + diphosphate. It carries out the reaction L-tyrosyl-[protein] + ATP = O-(5'-adenylyl)-L-tyrosyl-[protein] + diphosphate. The enzyme catalyses L-histidyl-[protein] + UTP = N(tele)-(5'-uridylyl)-L-histidyl-[protein] + diphosphate. It catalyses the reaction L-seryl-[protein] + UTP = O-(5'-uridylyl)-L-seryl-[protein] + diphosphate. The catalysed reaction is L-tyrosyl-[protein] + UTP = O-(5'-uridylyl)-L-tyrosyl-[protein] + diphosphate. In terms of biological role, nucleotidyltransferase involved in the post-translational modification of proteins. It can catalyze the addition of adenosine monophosphate (AMP) or uridine monophosphate (UMP) to a protein, resulting in modifications known as AMPylation and UMPylation. In Xanthomonas euvesicatoria pv. vesicatoria (strain 85-10) (Xanthomonas campestris pv. vesicatoria), this protein is Protein nucleotidyltransferase YdiU.